The sequence spans 231 residues: Nuclear transcription factor Y subunit C-9 (231 aa).

Positions N211–N231 are disordered.

It belongs to the NFYC/HAP5 subunit family. As to quaternary structure, heterotrimeric transcription factor composed of three components, NF-YA, NF-YB and NF-YC. Interacts with NFYA2, NFYB2, CO and RGA. Interacts with REF6 (via N-terminus). In terms of tissue distribution, ubiquitous. Present in etiolated seedlings.

It is found in the nucleus. In terms of biological role, stimulates the transcription of various genes by recognizing and binding to a CCAAT motif in promoters. Interacts with REF6 to directly regulate SOC1 transcription in response to flowering signals from photoperiod and gibberellic acid pathways. The chain is Nuclear transcription factor Y subunit C-9 (NFYC9) from Arabidopsis thaliana (Mouse-ear cress).